Reading from the N-terminus, the 225-residue chain is Large ribosomal subunit protein uL1 (225 aa).

Belongs to the universal ribosomal protein uL1 family. As to quaternary structure, part of the 50S ribosomal subunit.

In terms of biological role, binds directly to 23S rRNA. Probably involved in E site tRNA release. Protein L1 is also a translational repressor protein, it controls the translation of its operon by binding to its mRNA. This Thermofilum pendens (strain DSM 2475 / Hrk 5) protein is Large ribosomal subunit protein uL1.